The sequence spans 356 residues: Alanine racemase, catabolic (356 aa).

Residue lysine 35 is the Proton acceptor; specific for D-alanine of the active site. Lysine 35 carries the N6-(pyridoxal phosphate)lysine modification. A substrate-binding site is contributed by arginine 130. Tyrosine 253 serves as the catalytic Proton acceptor; specific for L-alanine. Residue methionine 301 coordinates substrate.

This sequence belongs to the alanine racemase family. Pyridoxal 5'-phosphate serves as cofactor.

It catalyses the reaction L-alanine = D-alanine. Its function is as follows. Isomerizes L-alanine to D-alanine which is then oxidized to pyruvate by DadA. In Klebsiella aerogenes (Enterobacter aerogenes), this protein is Alanine racemase, catabolic (dadB).